Here is a 285-residue protein sequence, read N- to C-terminus: Probable endonuclease 4 (285 aa).

Positions 69, 109, 145, 179, 182, 216, 229, 231, and 261 each coordinate Zn(2+).

It belongs to the AP endonuclease 2 family. Requires Zn(2+) as cofactor.

The enzyme catalyses Endonucleolytic cleavage to 5'-phosphooligonucleotide end-products.. Endonuclease IV plays a role in DNA repair. It cleaves phosphodiester bonds at apurinic or apyrimidinic (AP) sites, generating a 3'-hydroxyl group and a 5'-terminal sugar phosphate. The polypeptide is Probable endonuclease 4 (Cronobacter sakazakii (strain ATCC BAA-894) (Enterobacter sakazakii)).